Reading from the N-terminus, the 329-residue chain is Alpha/beta hydrolase domain-containing protein 17C (329 aa).

The interval 46-85 (APEQRGPGAPAPASAASTSSASAAAQPAPQQPEEGGAGPG) is disordered. A compositionally biased stretch (low complexity) spans 51–79 (GPGAPAPASAASTSSASAAAQPAPQQPEE). Residues S211, D276, and H305 each act as charge relay system in the active site.

Belongs to the AB hydrolase superfamily. ABHD17 family. Post-translationally, palmitoylated on cysteine residues located in a cysteine cluster at the N-terminus which promotes membrane localization. Palmitoylation is required for post-synaptic localization and for depalmitoylating activity towards DLG4/PSD95.

Its subcellular location is the recycling endosome membrane. It is found in the cell projection. The protein resides in the dendritic spine. It localises to the postsynaptic density membrane. It carries out the reaction S-hexadecanoyl-L-cysteinyl-[protein] + H2O = L-cysteinyl-[protein] + hexadecanoate + H(+). Functionally, hydrolyzes fatty acids from S-acylated cysteine residues in proteins. Has depalmitoylating activity towards NRAS and DLG4/PSD95. The chain is Alpha/beta hydrolase domain-containing protein 17C from Bos taurus (Bovine).